Consider the following 92-residue polypeptide: Large ribosomal subunit protein bL25 (92 aa).

Belongs to the bacterial ribosomal protein bL25 family. In terms of assembly, part of the 50S ribosomal subunit; part of the 5S rRNA/L5/L18/L25 subcomplex. Contacts the 5S rRNA. Binds to the 5S rRNA independently of L5 and L18.

In terms of biological role, this is one of the proteins that binds to the 5S RNA in the ribosome where it forms part of the central protuberance. This Photobacterium profundum (strain SS9) protein is Large ribosomal subunit protein bL25.